The chain runs to 1435 residues: Gag-Pol polyprotein (1435 aa).

Gly-2 carries N-myristoyl glycine; by host lipidation. Residues 7–31 form an interaction with Gp41 region; the sequence is VLSGGKLDAWEKIRLRPGGKKKYRL. The interaction with host CALM1 stretch occupies residues 8–43; it reads LSGGKLDAWEKIRLRPGGKKKYRLKHLVWASRELER. The tract at residues 12 to 19 is interaction with host AP3D1; it reads KLDAWEKI. An interaction with membrane phosphatidylinositol 4,5-bisphosphate and RNA region spans residues 14–33; sequence DAWEKIRLRPGGKKKYRLKH. The short motif at 16–22 is the Nuclear export signal element; sequence WEKIRLR. The Nuclear localization signal signature appears at 26–32; the sequence is KKKYRLK. The tract at residues 73 to 77 is interaction with membrane phosphatidylinositol 4,5-bisphosphate; that stretch reads EELKS. Positions 108-127 are disordered; sequence QNKSQQKTQQAAADKEKDNK. Polar residues predominate over residues 109-118; the sequence is NKSQQKTQQA. At Tyr-132 the chain carries Phosphotyrosine; by host. Residues 189-227 form an interaction with human PPIA/CYPA and NUP153 region; it reads NTVGGHQAAMQMLKDTINEEAAEWDRVHPVHAGPIPPGQ. Residues 277 to 363 are dimerization/Multimerization of capsid protein p24; it reads YSPVSILDIK…GGPSHKARVL (87 aa). 2 CCHC-type zinc fingers span residues 391–408 and 412–429; these read VKCFNCGKEGHIARNCRA and KGCWKCGREGHQMKDCTE. The disordered stretch occupies residues 445 to 482; the sequence is EARKFSPEQARTNSPTSRELRVRRGDDPLSEAGAAEGQ. Residues 462–471 show a composition bias toward basic and acidic residues; it reads RELRVRRGDD. Residues 489 to 493 form a dimerization of protease region; that stretch reads PQITL. One can recognise a Peptidase A2 domain in the interval 508–577; that stretch reads REALLDTGAD…TPVNIIGRNI (70 aa). The active-site For protease activity; shared with dimeric partner is Asp-513. Dimerization of protease regions lie at residues 537-543 and 576-588; these read GIGGFIK and NILTQIGCTLNFP. Positions 631 to 821 constitute a Reverse transcriptase domain; it reads EGKISRIGPE…PPFLWMGYEL (191 aa). Residues Asp-697, Asp-772, and Asp-773 each coordinate Mg(2+). Residues 814-822 form an RT 'primer grip' region; sequence FLWMGYELH. The Tryptophan repeat motif motif lies at 985–1001; sequence WETWWTEYWQATWIPEW. One can recognise an RNase H type-1 domain in the interval 1021–1144; that stretch reads IAGAETYYID…VDKLVSSGVR (124 aa). 4 residues coordinate Mg(2+): Asp-1030, Glu-1065, Asp-1085, and Asp-1136. The segment at 1150–1191 adopts an Integrase-type zinc-finger fold; the sequence is DGIDKAQEEHERYHNNWRAVASDFNLPPIVAKEIVASCDKCQ. Residues His-1159, His-1163, Cys-1187, and Cys-1190 each coordinate Zn(2+). The Integrase catalytic domain maps to 1201–1351; sequence VDCSPGIWQL…SAGERIIDII (151 aa). Asp-1211, Asp-1263, and Glu-1299 together coordinate Mg(2+). Residues 1370–1417 constitute a DNA-binding region (integrase-type); sequence FRVYYRDSRDPIWKGPAKLLWKGEGAVVIQDNSEIKVVPRREAKIIRD.

In terms of assembly, homotrimer; further assembles as hexamers of trimers. Interacts with gp41 (via C-terminus). Interacts with host CALM1; this interaction induces a conformational change in the Matrix protein, triggering exposure of the myristate group. Interacts with host AP3D1; this interaction allows the polyprotein trafficking to multivesicular bodies during virus assembly. Part of the pre-integration complex (PIC) which is composed of viral genome, matrix protein, Vpr and integrase. As to quaternary structure, homodimer; the homodimer further multimerizes as homohexamers or homopentamers. Interacts with human PPIA/CYPA; This interaction stabilizes the capsid. Interacts with human NUP153. Interacts with host PDZD8; this interaction stabilizes the capsid. Interacts with monkey TRIM5; this interaction destabilizes the capsid. Homodimer, whose active site consists of two apposed aspartic acid residues. In terms of assembly, heterodimer of p66 RT and p51 RT (RT p66/p51). Heterodimerization of RT is essential for DNA polymerase activity. The overall folding of the subdomains is similar in p66 RT and p51 RT but the spatial arrangements of the subdomains are dramatically different. As to quaternary structure, homodimer; possibly can form homotetramer. Part of the pre-integration complex (PIC) which is composed of viral genome, matrix protein, Vpr and integrase. Interacts with human SMARCB1/INI1 and human PSIP1/LEDGF isoform 1. Interacts with human KPNA3; this interaction might play a role in nuclear import of the pre-integration complex. Interacts with human NUP153; this interaction might play a role in nuclear import of the pre-integration complex. It depends on Mg(2+) as a cofactor. In terms of processing, specific enzymatic cleavages by the viral protease yield mature proteins. The protease is released by autocatalytic cleavage. The polyprotein is cleaved during and after budding, this process is termed maturation. Proteolytic cleavage of p66 RT removes the RNase H domain to yield the p51 RT subunit. Nucleocapsid protein p7 might be further cleaved after virus entry. Post-translationally, tyrosine phosphorylated presumably in the virion by a host kinase. Phosphorylation is apparently not a major regulator of membrane association. Phosphorylated possibly by host MAPK1; this phosphorylation is necessary for Pin1-mediated virion uncoating. In terms of processing, methylated by host PRMT6, impairing its function by reducing RNA annealing and the initiation of reverse transcription.

The protein resides in the host cell membrane. It is found in the host endosome. Its subcellular location is the host multivesicular body. It localises to the virion membrane. The protein localises to the host nucleus. The protein resides in the host cytoplasm. It is found in the virion. The catalysed reaction is Specific for a P1 residue that is hydrophobic, and P1' variable, but often Pro.. It carries out the reaction Endohydrolysis of RNA in RNA/DNA hybrids. Three different cleavage modes: 1. sequence-specific internal cleavage of RNA. Human immunodeficiency virus type 1 and Moloney murine leukemia virus enzymes prefer to cleave the RNA strand one nucleotide away from the RNA-DNA junction. 2. RNA 5'-end directed cleavage 13-19 nucleotides from the RNA end. 3. DNA 3'-end directed cleavage 15-20 nucleotides away from the primer terminus.. The enzyme catalyses 3'-end directed exonucleolytic cleavage of viral RNA-DNA hybrid.. It catalyses the reaction DNA(n) + a 2'-deoxyribonucleoside 5'-triphosphate = DNA(n+1) + diphosphate. Protease: The viral protease is inhibited by many synthetic protease inhibitors (PIs), such as amprenavir, atazanavir, indinavir, loprinavir, nelfinavir, ritonavir and saquinavir. Use of protease inhibitors in tritherapy regimens permit more ambitious therapeutic strategies. Reverse transcriptase/ribonuclease H: RT can be inhibited either by nucleoside RT inhibitors (NRTIs) or by non nucleoside RT inhibitors (NNRTIs). NRTIs act as chain terminators, whereas NNRTIs inhibit DNA polymerization by binding a small hydrophobic pocket near the RT active site and inducing an allosteric change in this region. Classical NRTIs are abacavir, adefovir (PMEA), didanosine (ddI), lamivudine (3TC), stavudine (d4T), tenofovir (PMPA), zalcitabine (ddC), and zidovudine (AZT). Classical NNRTIs are atevirdine (BHAP U-87201E), delavirdine, efavirenz (DMP-266), emivirine (I-EBU), and nevirapine (BI-RG-587). The tritherapies used as a basic effective treatment of AIDS associate two NRTIs and one NNRTI. In terms of biological role, mediates, with Gag polyprotein, the essential events in virion assembly, including binding the plasma membrane, making the protein-protein interactions necessary to create spherical particles, recruiting the viral Env proteins, and packaging the genomic RNA via direct interactions with the RNA packaging sequence (Psi). Gag-Pol polyprotein may regulate its own translation, by the binding genomic RNA in the 5'-UTR. At low concentration, the polyprotein would promote translation, whereas at high concentration, the polyprotein would encapsidate genomic RNA and then shut off translation. Its function is as follows. Targets the polyprotein to the plasma membrane via a multipartite membrane-binding signal, that includes its myristoylated N-terminus. Matrix protein is part of the pre-integration complex. Implicated in the release from host cell mediated by Vpu. Binds to RNA. Forms the conical core that encapsulates the genomic RNA-nucleocapsid complex in the virion. Most core are conical, with only 7% tubular. The core is constituted by capsid protein hexamer subunits. The core is disassembled soon after virion entry. Host restriction factors such as TRIM5-alpha or TRIMCyp bind retroviral capsids and cause premature capsid disassembly, leading to blocks in reverse transcription. Capsid restriction by TRIM5 is one of the factors which restricts HIV-1 to the human species. Host PIN1 apparently facilitates the virion uncoating. On the other hand, interactions with PDZD8 or CYPA stabilize the capsid. Functionally, encapsulates and protects viral dimeric unspliced genomic RNA (gRNA). Binds these RNAs through its zinc fingers. Acts as a nucleic acid chaperone which is involved in rearangement of nucleic acid secondary structure during gRNA retrotranscription. Also facilitates template switch leading to recombination. As part of the polyprotein, participates in gRNA dimerization, packaging, tRNA incorporation and virion assembly. In terms of biological role, aspartyl protease that mediates proteolytic cleavages of Gag and Gag-Pol polyproteins during or shortly after the release of the virion from the plasma membrane. Cleavages take place as an ordered, step-wise cascade to yield mature proteins. This process is called maturation. Displays maximal activity during the budding process just prior to particle release from the cell. Also cleaves Nef and Vif, probably concomitantly with viral structural proteins on maturation of virus particles. Hydrolyzes host EIF4GI and PABP1 in order to shut off the capped cellular mRNA translation. The resulting inhibition of cellular protein synthesis serves to ensure maximal viral gene expression and to evade host immune response. Also mediates cleavage of host YTHDF3. Mediates cleavage of host CARD8, thereby activating the CARD8 inflammasome, leading to the clearance of latent HIV-1 in patient CD4(+) T-cells after viral reactivation; in contrast, HIV-1 can evade CARD8-sensing when its protease remains inactive in infected cells prior to viral budding. Its function is as follows. Multifunctional enzyme that converts the viral RNA genome into dsDNA in the cytoplasm, shortly after virus entry into the cell. This enzyme displays a DNA polymerase activity that can copy either DNA or RNA templates, and a ribonuclease H (RNase H) activity that cleaves the RNA strand of RNA-DNA heteroduplexes in a partially processive 3' to 5' endonucleasic mode. Conversion of viral genomic RNA into dsDNA requires many steps. A tRNA(3)-Lys binds to the primer-binding site (PBS) situated at the 5'-end of the viral RNA. RT uses the 3' end of the tRNA primer to perform a short round of RNA-dependent minus-strand DNA synthesis. The reading proceeds through the U5 region and ends after the repeated (R) region which is present at both ends of viral RNA. The portion of the RNA-DNA heteroduplex is digested by the RNase H, resulting in a ssDNA product attached to the tRNA primer. This ssDNA/tRNA hybridizes with the identical R region situated at the 3' end of viral RNA. This template exchange, known as minus-strand DNA strong stop transfer, can be either intra- or intermolecular. RT uses the 3' end of this newly synthesized short ssDNA to perform the RNA-dependent minus-strand DNA synthesis of the whole template. RNase H digests the RNA template except for two polypurine tracts (PPTs) situated at the 5'-end and near the center of the genome. It is not clear if both polymerase and RNase H activities are simultaneous. RNase H probably can proceed both in a polymerase-dependent (RNA cut into small fragments by the same RT performing DNA synthesis) and a polymerase-independent mode (cleavage of remaining RNA fragments by free RTs). Secondly, RT performs DNA-directed plus-strand DNA synthesis using the PPTs that have not been removed by RNase H as primers. PPTs and tRNA primers are then removed by RNase H. The 3' and 5' ssDNA PBS regions hybridize to form a circular dsDNA intermediate. Strand displacement synthesis by RT to the PBS and PPT ends produces a blunt ended, linear dsDNA copy of the viral genome that includes long terminal repeats (LTRs) at both ends. Catalyzes viral DNA integration into the host chromosome, by performing a series of DNA cutting and joining reactions. This enzyme activity takes place after virion entry into a cell and reverse transcription of the RNA genome in dsDNA. The first step in the integration process is 3' processing. This step requires a complex comprising the viral genome, matrix protein, Vpr and integrase. This complex is called the pre-integration complex (PIC). The integrase protein removes 2 nucleotides from each 3' end of the viral DNA, leaving recessed CA OH's at the 3' ends. In the second step, the PIC enters cell nucleus. This process is mediated through integrase and Vpr proteins, and allows the virus to infect a non dividing cell. This ability to enter the nucleus is specific of lentiviruses, other retroviruses cannot and rely on cell division to access cell chromosomes. In the third step, termed strand transfer, the integrase protein joins the previously processed 3' ends to the 5' ends of strands of target cellular DNA at the site of integration. The 5'-ends are produced by integrase-catalyzed staggered cuts, 5 bp apart. A Y-shaped, gapped, recombination intermediate results, with the 5'-ends of the viral DNA strands and the 3' ends of target DNA strands remaining unjoined, flanking a gap of 5 bp. The last step is viral DNA integration into host chromosome. This involves host DNA repair synthesis in which the 5 bp gaps between the unjoined strands are filled in and then ligated. Since this process occurs at both cuts flanking the HIV genome, a 5 bp duplication of host DNA is produced at the ends of HIV-1 integration. Alternatively, Integrase may catalyze the excision of viral DNA just after strand transfer, this is termed disintegration. In Homo sapiens (Human), this protein is Gag-Pol polyprotein (gag-pol).